A 366-amino-acid polypeptide reads, in one-letter code: Tudor domain-containing protein 10 (366 aa).

The 74-residue stretch at 34–107 (TEVYVGNLPL…RKLFVNTSKR (74 aa)) folds into the RRM domain. Positions 210–317 (FWAMHVTEAL…PLTQPFMLEK (108 aa)) constitute a Tudor domain. Residues 216 to 237 (TEALHQNMQALFSTLAQAEEQQ) adopt a coiled-coil conformation.

The polypeptide is Tudor domain-containing protein 10 (TDRD10) (Homo sapiens (Human)).